Here is an 888-residue protein sequence, read N- to C-terminus: ETO1-like protein 1 (888 aa).

In terms of domain architecture, BTB spans 180-280 (KNVVFKIGEE…ACDRELASLI (101 aa)). 5 TPR repeats span residues 381 to 414 (VLGFHRLGCMRLLRKEYREAEEAFETAFNLGHVY), 441 to 477 (SSVSPPLGWMYQERSFYCEGDKKLEDLEKATELDPTL), 511 to 544 (LECLEIRFCLYLGMDDYEAALRDIQAALTLCPDY), 637 to 670 (HERLVYEGWILYDTGHCEEGLQKAKESIGIKRSF), and 711 to 744 (GQALNNLGSVYVDCEKLDLAADCYINALKVRHTR). Positions 755 to 793 (LRNDKAAAYEEMTRLIEKAQNNASAYEKRSEYCDRELAK) form a coiled coil. TPR repeat units follow at residues 807–840 (VYPYRYRAAVLMDSRKEREAITELSRAIAFKADL) and 842–873 (LLHLRAAFHEHIGDVTSALRDCRAALSVDPNH).

Belongs to the ETO1 family. Interacts with the C-terminal domain of ACS4, ACS5 and ACS9. As to expression, predominantly expressed in flowers.

It functions in the pathway protein modification; protein ubiquitination. In terms of biological role, possible regulator of the ethylene pathway, which acts by regulating the stability of 1-aminocyclopropane-1-carboxylate synthase (ACS) enzymes. May act as a substrate-specific adapter that connects ACS enzymes, such as ACS5, to ubiquitin ligase complexes, leading to proteasomal degradation of ACS enzymes. The chain is ETO1-like protein 1 (EOL1) from Arabidopsis thaliana (Mouse-ear cress).